A 129-amino-acid chain; its full sequence is MGVPMGKSLLAPLTFLALASCCFAAYRPSETLCGGELVDTLQFVCGDRGFYFSRPASRVSRRSSRGIVEECCFRSCDLALLETYCATPAKSERDVSTPPTVLPDNFPRYPVGKFFQYDTWKQSAQRLRR.

Residues 1–24 (MGVPMGKSLLAPLTFLALASCCFA) form the signal peptide. The b stretch occupies residues 25–52 (AYRPSETLCGGELVDTLQFVCGDRGFYF). 3 cysteine pairs are disulfide-bonded: cysteine 33/cysteine 72, cysteine 45/cysteine 85, and cysteine 71/cysteine 76. The segment at 53–65 (SRPASRVSRRSSR) is c. The interval 66–86 (GIVEECCFRSCDLALLETYCA) is a. The tract at residues 87-92 (TPAKSE) is d. Positions 93-129 (RDVSTPPTVLPDNFPRYPVGKFFQYDTWKQSAQRLRR) are cleaved as a propeptide — e peptide.

The protein belongs to the insulin family. In terms of assembly, interacts with MYORG; this interaction is required for IGF2 secretion. Interacts with integrins ITGAV:ITGB3 and ITGA6:ITGB4; integrin-binding is required for IGF2 signaling. Proteolytically processed by PCSK4, proIGF2 is cleaved at Arg-129 and Arg-92 to generate big-IGF2 and mature IGF2.

It localises to the secreted. The insulin-like growth factors possess growth-promoting activity. Major fetal growth hormone in mammals. Plays a key role in regulating fetoplacental development. IGF2 is influenced by placental lactogen. Also involved in tissue differentiation. In adults, involved in glucose metabolism in adipose tissue, skeletal muscle and liver. Acts as a ligand for integrin which is required for IGF2 signaling. Positively regulates myogenic transcription factor MYOD1 function by facilitating the recruitment of transcriptional coactivators, thereby controlling muscle terminal differentiation. Inhibits myoblast differentiation and modulates metabolism via increasing the mitochondrial respiration rate. Its function is as follows. Preptin undergoes glucose-mediated co-secretion with insulin, and acts as a physiological amplifier of glucose-mediated insulin secretion. Exhibits osteogenic properties by increasing osteoblast mitogenic activity through phosphoactivation of MAPK1 and MAPK3. The protein is Insulin-like growth factor 2 of Neovison vison (American mink).